A 64-amino-acid polypeptide reads, in one-letter code: Large ribosomal subunit protein bL32 (64 aa).

Residues 1 to 35 (MAVQKSRVTPSRRGMRRAHDALSAKQLSTDPTTGE) form a disordered region.

The protein belongs to the bacterial ribosomal protein bL32 family.

The chain is Large ribosomal subunit protein bL32 from Stenotrophomonas maltophilia (strain R551-3).